The primary structure comprises 359 residues: Probable E3 ubiquitin-protein ligase LUL4 (359 aa).

Residues 1-35 (MGISFSNNNRRRDNNNRRHLHHYPPPPPYYYLDPP) form a disordered region. A lipid anchor (N-myristoyl glycine) is attached at Gly2. The span at 23–35 (YPPPPPYYYLDPP) shows a compositional bias: pro residues. A DAR2 domain region spans residues 148–267 (FVFDALFDGS…GSFKVKVVKQ (120 aa)). The RING-type zinc-finger motif lies at 302-341 (CVICMTEAKDTAVLPCRHLCMCSDCAKELRLQSNKCPICR).

Belongs to the RING-type zinc finger family. LOG2 subfamily.

The catalysed reaction is S-ubiquitinyl-[E2 ubiquitin-conjugating enzyme]-L-cysteine + [acceptor protein]-L-lysine = [E2 ubiquitin-conjugating enzyme]-L-cysteine + N(6)-ubiquitinyl-[acceptor protein]-L-lysine.. Its pathway is protein modification; protein ubiquitination. Acts as an E3 ubiquitin-protein ligase, or as part of E3 complex, which accepts ubiquitin from specific E2 ubiquitin-conjugating enzymes and then transfers it to substrates (in vitro). This Arabidopsis thaliana (Mouse-ear cress) protein is Probable E3 ubiquitin-protein ligase LUL4 (LUL4).